Consider the following 3253-residue polypeptide: tRNA nuclease CdiA (3253 aa).

An N-terminal signal peptide occupies residues 1 to 32 (MHQPPVRFPYRLLSYLISTIIAGQPLLPAVGA). The segment at 36-322 (PQNGAGMDKA…AGGNLSVTGT (287 aa)) is two-partner system transport domain (TPS). Residues 351 to 1384 (GELTAGQNAM…ITIRTGHLLN (1034 aa)) are FHA-1. The tract at residues 1385-1656 (QREGINETKS…DLASGIVEGN (272 aa)) is receptor binding domain (RBD). The tract at residues 1657 to 1841 (YPLPSGNNGY…LSPKDVTLQN (185 aa)) is YP domain. Residues 1842–1902 (GSIISGQNVH…GLKAMGDINN (61 aa)) form a periplasmic FHA-1 repeat (pFR) region. The FHA-2 stretch occupies residues 1944–2548 (TYTGSIASVS…TSKYDSKQTS (605 aa)). Disordered stretches follow at residues 2228-2252 (GSSK…TIGS), 2362-2410 (TGDP…GKNR), 2483-2503 (GSEK…GKTV), and 2687-2712 (IRDR…DSIS). Composition is skewed to polar residues over residues 2240–2252 (GTTQ…TIGS), 2368–2403 (TGVS…NLSV), and 2490–2503 (TEWT…GKTV). A pretoxin (PT) domain region spans residues 2888 to 2930 (SDLSEEQKQTISTLATVSAGLAGGLTGNSSASAAVGAQSGKNA). The short motif at 2931 to 2934 (VDNN) is the VDNN CT cleavage motif element. The C-terminal effector domain (CT) stretch occupies residues 2931–3253 (VDNNYLSVSE…TGIVSNFHPK (323 aa)).

The protein in the N-terminal section; belongs to the CdiA toxin family. In the C-terminal section; belongs to the bacterial EndoU family. Forms a 1:1 complex with cognate immunity protein CdiI-STECO31. The cofactor is tRNase activity is metal-independent.. In terms of processing, the CT domain is cleaved upon binding to receptor Tsx on target cells.

Its subcellular location is the secreted. The protein localises to the target cell. The protein resides in the target cell cytoplasm. In terms of biological role, toxic component of a toxin-immunity protein module, which functions as a cellular contact-dependent growth inhibition (CDI) system. CDI modules allow bacteria to communicate with and inhibit the growth of closely related neighboring target bacteria in a contact-dependent fashion (target cell counts decrease 1000- to 10000-fold with this CDI). Uses outer membrane nucleoside transporter Tsx on target cells as a receptor. Gains access to the cytoplasm of target cells by using integral inner membrane protein PTS system glucose-specific EIICB component (ptsG). Targeting of the C-terminal domain (CT) domain (residues 2931-3253) in the absence of immunity protein inhibits cell growth and causes tRNA(UUC-Glu) cleavage; expression of cognate immunity protein CdiI-STECO31 neutralizes growth inhibition leaving tRNA(UUC-Glu) is intact, whereas non-cognate immunity proteins do not confer protection. The CT domain cleaves tRNA; it is most active against tRNA(UUC-Glu), but also has modest activity against tRNA(GUC-Asp), tRNA(UUG-Gln), tRNA(CCC-Gly), tRNA(UCC-Gly), tRNA(GCC-Gly), tRNA(UUU-Lys), tRNA(GGU-Thr) and tRNA(CCA-Trp); tRNA cleavage is inhibited by cognate immunity protein CdiI. Cleavage of tRNA(UUC-Glu) occurs in the anticodon loop between cytosine(37) and 2-methyladenosine(38) (C37-m2A38) and probably also occurs in the anticodon loop of other tRNAs as well. Functionally, the CdiA protein is thought to be exported from the cell through the central lumen of CdiB, the other half of its two-partner system (TPS). The TPS domain probably remains associated with CdiB while the FHA-1 domain forms an extended filament (33 nm long) with the receptor-binding domain (RBD) at its extremity; in the secretion arrested state the C-terminus of the RBD and YP domains form a hairpin-like structure as the FHA-2, PT and CT domains are periplasmic. The YP domain is probably responsible for this arrest at the point where it re-enters the host cell periplasm. Upon binding to a target cell outer membrane receptor (Tsx for this CDI) a signal is transmitted to activate secretion. The filament becomes about 5 nm longer, the rest of CdiA is secreted and the FHA-2 domain becomes stably associated with the target cell's outer membrane where it facilitates entry of the toxic CT domain into the target cell periplasm. From there the toxic CT domain is cleaved and gains access to the target cell cytoplasm via an inner membrane protein (PTS system glucose-specific EIICB component, ptsG for this CDI). The chain is tRNA nuclease CdiA from Escherichia coli (strain STEC_O31).